The following is a 419-amino-acid chain: Putative trans-acting enoyl reductase MT2525 (419 aa).

Residue lysine 127 forms an Isoglutamyl lysine isopeptide (Lys-Gln) (interchain with Q-Cter in protein Pup) linkage. Residues 197–232 (NDPDARRQLSDPYMLSPDRGAEPELGPQPDLPSRRG) are disordered. Residues 284-304 (VLAPVVSVVGGGVGNAMFGLA) form a helical membrane-spanning segment.

Belongs to the saccharopine dehydrogenase family. Enoyl reductase subfamily.

It localises to the cell membrane. The sequence is that of Putative trans-acting enoyl reductase MT2525 from Mycobacterium tuberculosis (strain CDC 1551 / Oshkosh).